We begin with the raw amino-acid sequence, 520 residues long: J protein JJJ2 (520 aa).

In terms of domain architecture, J spans 7–71 (TYYSVLGLPT…SSKQEYDAIL (65 aa)). Disordered regions lie at residues 82–257 (LGYK…DLQN) and 389–409 (FESSTGTMENHRSDFNLRGRP). Residues 91 to 100 (QNQSNNLNQQ) show a composition bias toward low complexity. Positions 152–182 (TSKNSKEQQGSQETTNTSENLQRNAKGNKNN) are enriched in polar residues. The span at 397 to 409 (ENHRSDFNLRGRP) shows a compositional bias: basic and acidic residues.

It localises to the cytoplasm. The protein localises to the nucleus. This chain is J protein JJJ2 (JJJ2), found in Vanderwaltozyma polyspora (strain ATCC 22028 / DSM 70294 / BCRC 21397 / CBS 2163 / NBRC 10782 / NRRL Y-8283 / UCD 57-17) (Kluyveromyces polysporus).